We begin with the raw amino-acid sequence, 282 residues long: ADP-ribosyl cyclase/cyclic ADP-ribose hydrolase (282 aa).

An N-terminal signal peptide occupies residues 1 to 24 (MSPVAIVACVCLAVTLTRISPSEA). Intrachain disulfides connect C39–C58, C75–C155, C136–C149, C230–C251, and C263–C272.

Belongs to the ADP-ribosyl cyclase family. Ovotestis.

It is found in the cytoplasmic vesicle. The enzyme catalyses NAD(+) = cyclic ADP-beta-D-ribose + nicotinamide + H(+). It carries out the reaction NAD(+) + H2O = ADP-D-ribose + nicotinamide + H(+). The catalysed reaction is nicotinate + NADP(+) = nicotinate-adenine dinucleotide phosphate + nicotinamide. Its activity is regulated as follows. Activity is presumably regulated by its sequestration in vesicles before egg fertilization. After fertilization and upon NADase release, it could then be regulated via its potential phosphorylation sites. Functionally, synthesizes cyclic ADP-ribose (cADPR), a second messenger for calcium mobilization from endoplasmic reticulum. Might make the Ca(2+) mobilizer nicotinate-adenine dinucleotide phosphate. Does not have cADPR hydrolase activity. This chain is ADP-ribosyl cyclase/cyclic ADP-ribose hydrolase, found in Aplysia kurodai (Kuroda's sea hare).